Here is a 3933-residue protein sequence, read N- to C-terminus: Circularly permutated Ras protein 2 (3933 aa).

Positions 12–46 (VHEVKKQELESILLQQEQEKQAKEEKESIKDTDDK) form a coiled coil. Disordered regions lie at residues 23-101 (ILLQ…IEKK), 136-189 (DIRE…RKET), 1022-1054 (ITTT…TTTT), and 2817-2839 (NNNN…RPTR). Residues 28–62 (EQEKQAKEEKESIKDTDDKPIEDTEHSTNNDKPIE) are compositionally biased toward basic and acidic residues. Positions 70–92 (TPTTTTTTKPTDEASSSSNNNNN) are enriched in low complexity. Residues 136–145 (DIREPTDKPF) are compositionally biased toward basic and acidic residues. The span at 146–156 (ENTSNIETTRQ) shows a compositional bias: polar residues. A coiled-coil region spans residues 167–215 (KTEAERLEQEQKQKQYDENRKETDRKLELELERLKNKKEEVEQIRAYFQ). Positions 168-189 (TEAERLEQEQKQKQYDENRKET) are enriched in basic and acidic residues. Positions 2817–2826 (NNNNNNNRYN) are enriched in low complexity. GTP is bound by residues 2853-2857 (DTAGQ), 2913-2916 (TKAD), and 2976-2983 (GDGGIGKS). Disordered stretches follow at residues 3036-3086 (LQSA…LSSR), 3107-3142 (RKSS…QDYE), and 3733-3754 (VIEP…PSSS). Over residues 3070 to 3086 (PSSSSTRTSVSTSLSSR) the composition is skewed to low complexity. The span at 3107–3120 (RKSSLVEEESKRQY) shows a compositional bias: basic and acidic residues. Residues 3121–3141 (DDDDESKSESSEYDDDDDQDY) show a composition bias toward acidic residues.

This sequence belongs to the small GTPase superfamily. CpRas family.

This is Circularly permutated Ras protein 2 (cpras2) from Dictyostelium discoideum (Social amoeba).